The following is a 179-amino-acid chain: Cytochrome b6-f complex iron-sulfur subunit (179 aa).

The helical transmembrane segment at 21 to 43 threads the bilayer; it reads LLTFGSVTGVALGALYPVVNYFI. The region spanning 61 to 162 is the Rieske domain; that stretch reads GNDVVLSKFL…VSVTDDKVFL (102 aa). 4 residues coordinate [2Fe-2S] cluster: C108, H110, C126, and H129. C113 and C128 are disulfide-bonded.

The protein belongs to the Rieske iron-sulfur protein family. The 4 large subunits of the cytochrome b6-f complex are cytochrome b6, subunit IV (17 kDa polypeptide, PetD), cytochrome f and the Rieske protein, while the 4 small subunits are PetG, PetL, PetM and PetN. The complex functions as a dimer. [2Fe-2S] cluster is required as a cofactor.

The protein resides in the cellular thylakoid membrane. It catalyses the reaction 2 oxidized [plastocyanin] + a plastoquinol + 2 H(+)(in) = 2 reduced [plastocyanin] + a plastoquinone + 4 H(+)(out). Its function is as follows. Component of the cytochrome b6-f complex, which mediates electron transfer between photosystem II (PSII) and photosystem I (PSI), cyclic electron flow around PSI, and state transitions. The protein is Cytochrome b6-f complex iron-sulfur subunit of Synechococcus elongatus (strain ATCC 33912 / PCC 7942 / FACHB-805) (Anacystis nidulans R2).